Reading from the N-terminus, the 136-residue chain is Nanos homolog 2 (136 aa).

Residues 27–51 form a disordered region; that stretch reads KQRQEGEVAEEPNSRPQEKSEQDLE. Basic and acidic residues predominate over residues 28-48; that stretch reads QRQEGEVAEEPNSRPQEKSEQ. A Nanos-type zinc finger spans residues 60–114; that stretch reads ICNFCKHNGESRHVYTSHQLKTPEGVVVCPILRHYVCPLCGATGDQAHTLKYCPL. Residues Cys-61, Cys-64, His-77, Cys-88, Cys-96, Cys-99, His-107, and Cys-112 each contribute to the Zn(2+) site. Short sequence motifs (C2HC) lie at residues 61–88 and 96–112; these read CNFCKHNGESRHVYTSHQLKTPEGVVVC and CPLCGATGDQAHTLKYC.

The protein belongs to the nanos family. Interacts with CNOT1, CNOT3, CNOT6L, CNOT7 and CNOT9. Predominantly expressed in male germ cells. Expressed in self-renewing spermatogonial stem cells and developing gonads.

It localises to the cytoplasm. Its subcellular location is the P-body. The protein resides in the perinuclear region. Its function is as follows. Plays a key role in the sexual differentiation of germ cells by promoting the male fate but suppressing the female fate. Represses the female fate pathways by suppressing meiosis, which in turn results in the promotion of the male fate. Maintains the suppression of meiosis by preventing STRA8 expression, which is required for premeiotic DNA replication, after CYP26B1 is decreased. Regulates the localization of the CCR4-NOT deadenylation complex to P-bodies and plays a role in recruiting the complex to trigger the degradation of mRNAs involved in meiosis. Required for the maintenance of the spermatogonial stem cell population. Not essential for the assembly of P-bodies but is required for the maintenance of their normal state. In Mus musculus (Mouse), this protein is Nanos homolog 2 (Nanos2).